The primary structure comprises 486 residues: Ribulose bisphosphate carboxylase large chain, plasmid (486 aa).

Substrate-binding residues include Asn-126 and Thr-176. Residue Lys-178 is the Proton acceptor of the active site. Lys-180 provides a ligand contact to substrate. Residues Lys-204, Asp-206, and Glu-207 each contribute to the Mg(2+) site. At Lys-204 the chain carries N6-carboxylysine. The Proton acceptor role is filled by His-296. The substrate site is built by Arg-297, His-329, and Ser-381.

This sequence belongs to the RuBisCO large chain family. Type I subfamily. As to quaternary structure, heterohexadecamer of 8 large chains and 8 small chains. Mg(2+) serves as cofactor.

The catalysed reaction is 2 (2R)-3-phosphoglycerate + 2 H(+) = D-ribulose 1,5-bisphosphate + CO2 + H2O. It carries out the reaction D-ribulose 1,5-bisphosphate + O2 = 2-phosphoglycolate + (2R)-3-phosphoglycerate + 2 H(+). RuBisCO catalyzes two reactions: the carboxylation of D-ribulose 1,5-bisphosphate, the primary event in carbon dioxide fixation, as well as the oxidative fragmentation of the pentose substrate. Both reactions occur simultaneously and in competition at the same active site. This chain is Ribulose bisphosphate carboxylase large chain, plasmid (cbbL2), found in Cupriavidus necator (strain ATCC 17699 / DSM 428 / KCTC 22496 / NCIMB 10442 / H16 / Stanier 337) (Ralstonia eutropha).